We begin with the raw amino-acid sequence, 443 residues long: 3-phosphoshikimate 1-carboxyvinyltransferase (443 aa).

Positions 1–22 (MSHASRPTPLEARGSTPLTGRV) are disordered. Residues lysine 28, serine 29, and arginine 33 each contribute to the 3-phosphoshikimate site. Phosphoenolpyruvate is bound at residue lysine 28. Positions 101 and 129 each coordinate phosphoenolpyruvate. Positions 174, 176, 326, and 353 each coordinate 3-phosphoshikimate. Glutamine 176 contributes to the phosphoenolpyruvate binding site. Aspartate 326 acts as the Proton acceptor in catalysis. Positions 357 and 400 each coordinate phosphoenolpyruvate.

It belongs to the EPSP synthase family. In terms of assembly, monomer.

The protein localises to the cytoplasm. It catalyses the reaction 3-phosphoshikimate + phosphoenolpyruvate = 5-O-(1-carboxyvinyl)-3-phosphoshikimate + phosphate. It functions in the pathway metabolic intermediate biosynthesis; chorismate biosynthesis; chorismate from D-erythrose 4-phosphate and phosphoenolpyruvate: step 6/7. Functionally, catalyzes the transfer of the enolpyruvyl moiety of phosphoenolpyruvate (PEP) to the 5-hydroxyl of shikimate-3-phosphate (S3P) to produce enolpyruvyl shikimate-3-phosphate and inorganic phosphate. The sequence is that of 3-phosphoshikimate 1-carboxyvinyltransferase from Afipia carboxidovorans (strain ATCC 49405 / DSM 1227 / KCTC 32145 / OM5) (Oligotropha carboxidovorans).